The primary structure comprises 499 residues: Hexokinase-2, chloroplastic (499 aa).

Residues 1-30 (MSVTVSSPAGRSFHISRSPYKKISKPRVII) constitute a chloroplast transit peptide. Residues 39–490 (LAVAPILTKL…SGIGAALLAA (452 aa)) form the Hexokinase domain. The segment at 94 to 232 (TGNEKGLFYA…GLGMQVSALV (139 aa)) is hexokinase small subdomain. ADP is bound by residues glycine 108, threonine 109, and asparagine 110. D-glucose-binding residues include threonine 198, lysine 199, asparagine 233, and aspartate 234. The hexokinase large subdomain stretch occupies residues 233 to 479 (NDTVATLAGA…KNVVIEHSKD (247 aa)). Threonine 257 lines the ADP pocket. D-glucose is bound by residues asparagine 260, glutamate 288, and glutamate 318. An ADP-binding site is contributed by glycine 444.

This sequence belongs to the hexokinase family. In terms of tissue distribution, expressed in vascular starch sheath, xylem parenchyma, guard cells and root tips.

It localises to the plastid. The protein localises to the chloroplast stroma. The enzyme catalyses a D-hexose + ATP = a D-hexose 6-phosphate + ADP + H(+). It carries out the reaction D-fructose + ATP = D-fructose 6-phosphate + ADP + H(+). The catalysed reaction is D-glucose + ATP = D-glucose 6-phosphate + ADP + H(+). Its pathway is carbohydrate metabolism; hexose metabolism. It functions in the pathway carbohydrate degradation; glycolysis; D-glyceraldehyde 3-phosphate and glycerone phosphate from D-glucose: step 1/4. Fructose and glucose phosphorylating enzyme. The sequence is that of Hexokinase-2, chloroplastic (HXK2) from Nicotiana tabacum (Common tobacco).